Consider the following 129-residue polypeptide: Small ribosomal subunit protein uS11 (129 aa).

Belongs to the universal ribosomal protein uS11 family. As to quaternary structure, part of the 30S ribosomal subunit. Interacts with proteins S7 and S18. Binds to IF-3.

Functionally, located on the platform of the 30S subunit, it bridges several disparate RNA helices of the 16S rRNA. Forms part of the Shine-Dalgarno cleft in the 70S ribosome. In Ectopseudomonas mendocina (strain ymp) (Pseudomonas mendocina), this protein is Small ribosomal subunit protein uS11.